The chain runs to 339 residues: Anthranilate phosphoribosyltransferase (339 aa).

5-phospho-alpha-D-ribose 1-diphosphate contacts are provided by residues Gly86, 89-90 (GD), Thr94, 96-99 (NIST), 114-122 (KHGNRGVSS), and Ser126. An anthranilate-binding site is contributed by Gly86. Mg(2+) is bound at residue Ser98. Asn117 lines the anthranilate pocket. Arg172 serves as a coordination point for anthranilate. Mg(2+)-binding residues include Asp230 and Glu231.

Belongs to the anthranilate phosphoribosyltransferase family. As to quaternary structure, homodimer. It depends on Mg(2+) as a cofactor.

It carries out the reaction N-(5-phospho-beta-D-ribosyl)anthranilate + diphosphate = 5-phospho-alpha-D-ribose 1-diphosphate + anthranilate. It functions in the pathway amino-acid biosynthesis; L-tryptophan biosynthesis; L-tryptophan from chorismate: step 2/5. Functionally, catalyzes the transfer of the phosphoribosyl group of 5-phosphorylribose-1-pyrophosphate (PRPP) to anthranilate to yield N-(5'-phosphoribosyl)-anthranilate (PRA). The polypeptide is Anthranilate phosphoribosyltransferase (Photobacterium profundum (strain SS9)).